An 876-amino-acid chain; its full sequence is Alanine--tRNA ligase (876 aa).

Residues His566, His570, Cys668, and His672 each coordinate Zn(2+).

Belongs to the class-II aminoacyl-tRNA synthetase family. Zn(2+) serves as cofactor.

It localises to the cytoplasm. It carries out the reaction tRNA(Ala) + L-alanine + ATP = L-alanyl-tRNA(Ala) + AMP + diphosphate. In terms of biological role, catalyzes the attachment of alanine to tRNA(Ala) in a two-step reaction: alanine is first activated by ATP to form Ala-AMP and then transferred to the acceptor end of tRNA(Ala). Also edits incorrectly charged Ser-tRNA(Ala) and Gly-tRNA(Ala) via its editing domain. This chain is Alanine--tRNA ligase, found in Petrotoga mobilis (strain DSM 10674 / SJ95).